Reading from the N-terminus, the 339-residue chain is Replication factor C subunit 5 (339 aa).

Residue 59–66 coordinates ATP; the sequence is GPPGTGKT.

Belongs to the activator 1 small subunits family. In terms of assembly, subunit of the RFC complex, an heteropentameric complex consisting of a large subunit RFC1 and four small subunits RFC2, RFC3, RFC4 and RFC5; the RFC complex interacts with PCNA. Forms an heterotetrameric complex with RFC2, RFC3 and RFC4; this complex has ATPase activity but is not stimulated by PCNA. The heterotetramer of subunits RFC2, RFC3, RFC4 and RFC5 interacts with RAD17.

Its subcellular location is the nucleus. In terms of biological role, subunit of the replication factor C (RFC) complex which acts during elongation of primed DNA templates by DNA polymerases delta and epsilon, and is necessary for ATP-dependent loading of proliferating cell nuclear antigen (PCNA) onto primed DNA. The sequence is that of Replication factor C subunit 5 (Rfc5) from Mus musculus (Mouse).